Here is a 560-residue protein sequence, read N- to C-terminus: RNA polymerase-associated protein C651.09c (560 aa).

2 disordered regions span residues 15 to 74 and 128 to 207; these read DDSD…KNPY and YMAQ…KVEQ. The segment covering 148 to 171 has biased composition (basic and acidic residues); the sequence is GKRDKLTELKKRRQERSARSVSER. Acidic residues predominate over residues 180–195; sequence DYEEQNESEKSEEEEG. Ser-197 is subject to Phosphoserine. Positions 214–345 constitute a Plus3 domain; the sequence is SANLYDLNAI…KLNDLRDMSK (132 aa). Residues 387–456 are a coiled coil; the sequence is AGNAELVKEI…RRRLSAAATA (70 aa). Residues 440–449 show a composition bias toward basic and acidic residues; the sequence is EQRMNEERRR. Residues 440-486 form a disordered region; that stretch reads EQRMNEERRRLSAAATATPMSAPTSVLTGTSPQPSPSLSTSIMSTPK. The span at 451 to 480 shows a compositional bias: low complexity; that stretch reads SAAATATPMSAPTSVLTGTSPQPSPSLSTS. 2 positions are modified to phosphoserine: Ser-502 and Ser-506.

In terms of assembly, component of the PAF1 complex.

The protein resides in the nucleus. Its subcellular location is the nucleoplasm. In terms of biological role, the PAF1 complex is a multifunctional complex. Involved in transcription initiation via genetic interactions with TATA-binding proteins. Involved in elongation. Also has a role in transcription-coupled histone modification. Important for TATA site selection by TBP. Directly or indirectly regulates the DNA-binding properties of the TATA box-binding protein, and the relative activities of different TATA elements. The sequence is that of RNA polymerase-associated protein C651.09c from Schizosaccharomyces pombe (strain 972 / ATCC 24843) (Fission yeast).